Reading from the N-terminus, the 550-residue chain is Probable acyl-activating enzyme 9 (550 aa).

This sequence belongs to the ATP-dependent AMP-binding enzyme family. As to expression, expressed in leaves, flowers and developing seeds.

Its function is as follows. May act as an acid--thiol ligase that activates carboxylic acids by forming acyl-CoAs. This chain is Probable acyl-activating enzyme 9 (AEE9), found in Arabidopsis thaliana (Mouse-ear cress).